Here is a 1072-residue protein sequence, read N- to C-terminus: Carbamoyl phosphate synthase large chain (1072 aa).

Positions 1–401 are carboxyphosphate synthetic domain; the sequence is MPKRLDINTI…SLLKAVRSLE (401 aa). ATP-binding residues include Arg129, Arg169, Gly175, Gly176, Lys208, Ile210, Glu215, Gly241, Val242, His243, Gln284, and Glu298. An ATP-grasp 1 domain is found at 133 to 327; it reads RTLMQELNEP…IAKLAAKIAV (195 aa). 3 residues coordinate Mg(2+): Gln284, Glu298, and Asn300. Mn(2+)-binding residues include Gln284, Glu298, and Asn300. Residues 402–546 form an oligomerization domain region; that stretch reads LGIYHLELDH…YSTYADENES (145 aa). The segment at 547-929 is carbamoyl phosphate synthetic domain; sequence IVTDRKSVVV…ALYKGLVASG (383 aa). One can recognise an ATP-grasp 2 domain in the interval 671-861; that stretch reads EAALTKLGIP…MANVATKVIL (191 aa). 9 residues coordinate ATP: Arg707, Arg746, Glu752, Gly777, Val778, His779, Ser780, Gln820, and Glu832. Mg(2+)-binding residues include Gln820, Glu832, and Asn834. Gln820, Glu832, and Asn834 together coordinate Mn(2+). Residues 930–1072 form the MGS-like domain; sequence INIPTHGSVI…QTKRHEVVHA (143 aa). The allosteric domain stretch occupies residues 930–1072; it reads INIPTHGSVI…QTKRHEVVHA (143 aa).

Belongs to the CarB family. In terms of assembly, composed of two chains; the small (or glutamine) chain promotes the hydrolysis of glutamine to ammonia, which is used by the large (or ammonia) chain to synthesize carbamoyl phosphate. Tetramer of heterodimers (alpha,beta)4. Mg(2+) is required as a cofactor. Requires Mn(2+) as cofactor.

It carries out the reaction hydrogencarbonate + L-glutamine + 2 ATP + H2O = carbamoyl phosphate + L-glutamate + 2 ADP + phosphate + 2 H(+). The catalysed reaction is hydrogencarbonate + NH4(+) + 2 ATP = carbamoyl phosphate + 2 ADP + phosphate + 2 H(+). Its pathway is amino-acid biosynthesis; L-arginine biosynthesis; carbamoyl phosphate from bicarbonate: step 1/1. It functions in the pathway pyrimidine metabolism; UMP biosynthesis via de novo pathway; (S)-dihydroorotate from bicarbonate: step 1/3. Large subunit of the glutamine-dependent carbamoyl phosphate synthetase (CPSase). CPSase catalyzes the formation of carbamoyl phosphate from the ammonia moiety of glutamine, carbonate, and phosphate donated by ATP, constituting the first step of 2 biosynthetic pathways, one leading to arginine and/or urea and the other to pyrimidine nucleotides. The large subunit (synthetase) binds the substrates ammonia (free or transferred from glutamine from the small subunit), hydrogencarbonate and ATP and carries out an ATP-coupled ligase reaction, activating hydrogencarbonate by forming carboxy phosphate which reacts with ammonia to form carbamoyl phosphate. This is Carbamoyl phosphate synthase large chain from Bacillus cereus (strain AH820).